Here is a 601-residue protein sequence, read N- to C-terminus: Terpinolene synthase, chloroplastic (601 aa).

Residues 1–32 (MSTFVISNSMHVGISFSFLHKLPQTPPPQVVC) constitute a chloroplast transit peptide. Asp354, Asp358, Asp498, Thr502, and Glu506 together coordinate Mg(2+). Residues 354–358 (DDVYD) carry the DDXXD motif motif.

It belongs to the terpene synthase family. Tpsd subfamily. It depends on Mg(2+) as a cofactor. Mn(2+) serves as cofactor.

The protein localises to the plastid. It localises to the chloroplast. It catalyses the reaction (2E)-geranyl diphosphate = terpinolene + diphosphate. It functions in the pathway secondary metabolite biosynthesis; terpenoid biosynthesis. Its function is as follows. Monoterpene synthase that catalyzes the formation of terpinolene and other monoterpenes from geranyl diphosphate. In Ocimum basilicum (Sweet basil), this protein is Terpinolene synthase, chloroplastic (TES).